The primary structure comprises 627 residues: Interferon-induced GTP-binding protein MxB (627 aa).

The region spanning 34 to 307 (DLALPAIAVI…LVHHIQRSLP (274 aa)) is the Dynamin-type G domain. Residues 44–51 (GDQSSGKS) form a G1 motif region. Residue 44–51 (GDQSSGKS) participates in GTP binding. The interval 69-71 (VTR) is G2 motif. The interval 145-148 (DLPG) is G3 motif. Residues 145-149 (DLPGI) and 214-217 (TKPD) each bind GTP. The segment at 214-217 (TKPD) is G4 motif. The G5 motif stretch occupies residues 246–249 (RCRG). Residues 541-627 (LSEMKLHLES…MKAQNLLATY (87 aa)) form the GED domain.

Belongs to the TRAFAC class dynamin-like GTPase superfamily. Dynamin/Fzo/YdjA family.

It localises to the cytoplasm. The sequence is that of Interferon-induced GTP-binding protein MxB (mxb) from Danio rerio (Zebrafish).